The chain runs to 385 residues: MAKYFTSESVSAGHPDKIADQIADAILDAVLEQDPKARSAVEVTTSTGDVSIFGELSTNAYVNIRKIATDTIREIGYNHAELGFTADSVNVSNKIVEQSGDIAQAVDNAEDDPDQLGAGDQGMVFGYATNETDSYLPLTLALSHRLMRKIRDARENEILPYLRPDAKGEVTVELDDNDKVKRIAAVVLSTQHDDEVTLEQLRADIRKHVIDEVLPQDLVDEDTIYYINPSGRFVLGGPQADSGLTGRKIIVDTYGGAAHHGGGAFSGKDATKVDRSAAYYARYVAKNMVAAGVADKLELQVSYAIGVARPVSLNVDSFGTAKVSEEKINEIITKLFDFRPLAIINNLNLRRPIYKQTAAFGHFGRTDIDLPWESLDKVKEIKNLL.

Residue H14 coordinates ATP. Position 16 (D16) interacts with Mg(2+). E42 is a binding site for K(+). Residues E55 and Q98 each contribute to the L-methionine site. The flexible loop stretch occupies residues 98–108 (QSGDIAQAVDN). ATP-binding positions include 165-167 (DAK), 232-233 (RF), D241, 247-248 (RK), A264, and K268. Residue D241 coordinates L-methionine. K272 is a binding site for L-methionine.

Belongs to the AdoMet synthase family. In terms of assembly, homotetramer; dimer of dimers. Mg(2+) serves as cofactor. Requires K(+) as cofactor.

It is found in the cytoplasm. The catalysed reaction is L-methionine + ATP + H2O = S-adenosyl-L-methionine + phosphate + diphosphate. It functions in the pathway amino-acid biosynthesis; S-adenosyl-L-methionine biosynthesis; S-adenosyl-L-methionine from L-methionine: step 1/1. Its function is as follows. Catalyzes the formation of S-adenosylmethionine (AdoMet) from methionine and ATP. The overall synthetic reaction is composed of two sequential steps, AdoMet formation and the subsequent tripolyphosphate hydrolysis which occurs prior to release of AdoMet from the enzyme. This Leuconostoc mesenteroides subsp. mesenteroides (strain ATCC 8293 / DSM 20343 / BCRC 11652 / CCM 1803 / JCM 6124 / NCDO 523 / NBRC 100496 / NCIMB 8023 / NCTC 12954 / NRRL B-1118 / 37Y) protein is S-adenosylmethionine synthase.